The chain runs to 466 residues: Adenosylhomocysteinase (466 aa).

Positions 57, 132, and 192 each coordinate substrate. 193–195 contacts NAD(+); sequence TTT. Substrate-binding residues include Lys222 and Asp226. NAD(+)-binding positions include Asn227, 256-261, Glu279, Asn314, 335-337, and Asn380; these read GYGDVG and IGH.

Belongs to the adenosylhomocysteinase family. NAD(+) serves as cofactor.

It is found in the cytoplasm. It carries out the reaction S-adenosyl-L-homocysteine + H2O = L-homocysteine + adenosine. It functions in the pathway amino-acid biosynthesis; L-homocysteine biosynthesis; L-homocysteine from S-adenosyl-L-homocysteine: step 1/1. Its function is as follows. May play a key role in the regulation of the intracellular concentration of adenosylhomocysteine. This is Adenosylhomocysteinase from Brucella melitensis biotype 2 (strain ATCC 23457).